A 609-amino-acid polypeptide reads, in one-letter code: Rhotekin-2 (609 aa).

In terms of domain architecture, REM-1 spans 5-81 (SLRGPALRLA…LQKLEEQIAN (77 aa)). The stretch at 56 to 91 (KNLMVCNARLMAYTSELQKLEEQIANQTGRCDVKFE) forms a coiled coil. The PH domain maps to 286 to 393 (EDAFAGFLNQ…WMEAFWQHFF (108 aa)). Disordered stretches follow at residues 495–520 (HDEK…KSQS) and 554–609 (KPMA…QAQV). Residues 569 to 582 (RLSDGEHTDTKTNF) show a composition bias toward basic and acidic residues.

In terms of tissue distribution, expressed in lymphocytes, CD4 positive T-cells and bone marrow-derived cells. Also expressed in lung, colon, thymus and brain.

Functionally, may play an important role in lymphopoiesis. This Homo sapiens (Human) protein is Rhotekin-2 (RTKN2).